The following is a 227-amino-acid chain: Ribose-5-phosphate isomerase A (227 aa).

Residues T26–T29, D82–D85, and K95–G98 each bind substrate. The active-site Proton acceptor is E104. K122 is a substrate binding site.

This sequence belongs to the ribose 5-phosphate isomerase family. Homodimer.

It catalyses the reaction aldehydo-D-ribose 5-phosphate = D-ribulose 5-phosphate. Its pathway is carbohydrate degradation; pentose phosphate pathway; D-ribose 5-phosphate from D-ribulose 5-phosphate (non-oxidative stage): step 1/1. Its function is as follows. Catalyzes the reversible conversion of ribose-5-phosphate to ribulose 5-phosphate. The sequence is that of Ribose-5-phosphate isomerase A from Streptococcus equi subsp. zooepidemicus (strain MGCS10565).